A 140-amino-acid chain; its full sequence is MLTSYVKVLEQNNLRLTKPRIALLKCLIEHQDWHNLSQIKTHLDLANQPSTLASIYNNLRILAKLKLINIFVDPERFETYYCLRHAEHNHIYLFDEVKQQFFTLPLTDGQIKTLLETQNHTSKVKLNDFYIVARGEINND.

This is an uncharacterized protein from Mycoplasma genitalium (strain ATCC 33530 / DSM 19775 / NCTC 10195 / G37) (Mycoplasmoides genitalium).